A 360-amino-acid polypeptide reads, in one-letter code: Phospho-N-acetylmuramoyl-pentapeptide-transferase (360 aa).

Helical transmembrane passes span 21–41 (YITF…LWIG), 73–93 (TMGG…WADL), 98–118 (VWFV…DDYW), 132–152 (WKYF…YAIG), 168–188 (VMPQ…VGTS), 199–219 (GLAI…AWAT), 236–256 (SGEL…FLWF), 263–283 (VFMG…IAVL), 288–308 (LLLV…ILQV), and 338–358 (VIVR…VTLK).

Belongs to the glycosyltransferase 4 family. MraY subfamily. It depends on Mg(2+) as a cofactor.

The protein localises to the cell inner membrane. The catalysed reaction is UDP-N-acetyl-alpha-D-muramoyl-L-alanyl-gamma-D-glutamyl-meso-2,6-diaminopimeloyl-D-alanyl-D-alanine + di-trans,octa-cis-undecaprenyl phosphate = di-trans,octa-cis-undecaprenyl diphospho-N-acetyl-alpha-D-muramoyl-L-alanyl-D-glutamyl-meso-2,6-diaminopimeloyl-D-alanyl-D-alanine + UMP. It functions in the pathway cell wall biogenesis; peptidoglycan biosynthesis. Catalyzes the initial step of the lipid cycle reactions in the biosynthesis of the cell wall peptidoglycan: transfers peptidoglycan precursor phospho-MurNAc-pentapeptide from UDP-MurNAc-pentapeptide onto the lipid carrier undecaprenyl phosphate, yielding undecaprenyl-pyrophosphoryl-MurNAc-pentapeptide, known as lipid I. The polypeptide is Phospho-N-acetylmuramoyl-pentapeptide-transferase (Glaesserella parasuis serovar 5 (strain SH0165) (Haemophilus parasuis)).